Here is a 50-residue protein sequence, read N- to C-terminus: LCNERPSQTWSGNCGNTAHCDKQCQDWEKASHGACHKRENHWKCFCYFNC.

4 cysteine pairs are disulfide-bonded: Cys-2–Cys-50, Cys-14–Cys-35, Cys-20–Cys-44, and Cys-24–Cys-46.

The protein belongs to the DEFL family.

The protein localises to the secreted. Possesses antimicrobial activity sensitive to inorganic cations. Binds specifically to the fungal plasma membrane. Has no inhibitory effect on insect gut alpha-amylase. This Aesculus hippocastanum (Horse chestnut) protein is Defensin-like protein 1.